The sequence spans 1121 residues: Cuscuta receptor 1 (1121 aa).

The first 20 residues, 1–20 (MGNIKFLLLVFFLIVVVVNG), serve as a signal peptide directing secretion. The Extracellular segment spans residues 21–1058 (CWEEERNALL…EESSELEDIQ (1038 aa)). Asn91 carries N-linked (GlcNAc...) asparagine glycosylation. LRR repeat units lie at residues 98–122 (FKSLQVLLLSSQNIIGWTKNEGFSK), 126–152 (LPNLKEVDLQYNPIDPKVLLSSLCWIS), 185–209 (LSNLRELWFEGYEINDINILSALGE), 210–233 (LRNLEKLILDDNNFNSTIFSSLKI), 234–259 (FPSLKHLNLAANEINGNVEMNDIIDL), 260–282 (SNLEYLDLSDNNIHSFATTKGNK), 284–308 (MTSLRSLLLGSSYSNSSRVIRSLKS), and 309–331 (FSSLKSLSYKNSNLTSPSIIYAL). A glycan (N-linked (GlcNAc...) asparagine) is linked at Asn224. Asn298, Asn321, and Asn333 each carry an N-linked (GlcNAc...) asparagine glycan. An LRR 9 repeat occupies 334-360 (LSTVEYLYFKGSSLNDNFLPNIGQMTS). N-linked (GlcNAc...) asparagine glycosylation is found at Asn372 and Asn406. 21 LRR repeats span residues 383-406 (LKYIEELDFLNNNFVGTLPLCLGN), 407-432 (LTSLRWLSLAGNNLHGNIASHSIWRR), 433-457 (LTSLEYLDIADNQFDVPLSFSQFSD), 459-479 (KKLIYLNVGYNTIITDTEYQN), 507-531 (QYDLRILAIEGNQLQGKFPTWLLEN), 556-580 (HLHLEAVDVSNNKLNGHIPQNMSLA), 581-605 (FPKLLSLNMSHNHLEGPIPSKISGI), 607-628 (LTILDLSVNFLSGEVPGDLAVV), 630-654 (SPQLFYLRLSNNKLKGKIFSEEFRP), 655-678 (HVLSFLYLNDNNFEGALPSNVFLS), 680-701 (LITLDASRNNFSGEIPGCTRDN), 702-725 (RRLLQLDLSKNHLQGLIPVEICNL), 726-749 (KIINVLAISENKISGSIPSCVSSL), 751-772 (LKHIHLQKNQLGGELGHVIFNF), 773-796 (SSLITLDLRYNNFAGNIPYTIGSL), 797-820 (SNLNYLLLSNNKLEGDIPTQICML), 822-846 (NLSIVDLSFNKLYGPLPPCLGYLTQ), 914-938 (LKYMSGIDLSSNRLTGEIPVELGNM), 939-961 (SNIHALNLSHNHLNGRIPNTFSN), 962-986 (LQEIESLDLSCNRLNGSIPVGLLEL), and 988-1012 (SLAVFSVAYNNLSGAVPDFKAQFGT). N-linked (GlcNAc...) asparagine glycosylation is found at Asn531, Asn576, and Asn588. N-linked (GlcNAc...) asparagine glycosylation occurs at Asn689. Residue Asn771 is glycosylated (N-linked (GlcNAc...) asparagine). Residues Asn822, Asn937, Asn945, Asn976, Asn998, Asn1014, and Asn1041 are each glycosylated (N-linked (GlcNAc...) asparagine). The chain crosses the membrane as a helical span at residues 1059–1079 (CFYIGFVVSFGAILLGLAAAL). Residues 1080–1121 (CLNRHWRRAWFRMIEALMFYCYYFVLDNIVTPIKSRWYKNVG) are Cytoplasmic-facing.

It belongs to the RLP family. In terms of assembly, interacts with an 11 kDa glycine-rich protein (GRP) of C.reflexa. Interacts with SOBIR1 and SOBIR1-like kinases; presence or absence of GRP has no effect on interaction.

The protein localises to the cell membrane. Its subcellular location is the cell surface. Its function is as follows. Involved in plant defense. Contributes to resistance against parasitic plant C.reflexa. Acts as a receptor for the 11 kDa glycine-rich protein (GRP) of C.reflexa inducing immune responses such as emission of stress-related phytohormone ethylene, reactive oxygen species (ROS) release, and hypersensitive cell death. Recognizes a specific pathogen-associated molecular pattern (PAMP), a cysteine-rich peptide 21 (crip21), from GRP located on the cell wall of C.reflexa. The protein is Cuscuta receptor 1 of Solanum lycopersicum (Tomato).